A 417-amino-acid polypeptide reads, in one-letter code: Frizzy aggregation protein FrzCD (417 aa).

Residues 1–11 show a composition bias toward basic and acidic residues; it reads MSLDTPNEKPA. The tract at residues 1–34 is disordered; it reads MSLDTPNEKPAGKARARKAPASKAGATNAASTSS. Residues 21–34 are compositionally biased toward low complexity; sequence ASKAGATNAASTSS. The Methyl-accepting transducer domain occupies 144 to 380; the sequence is AALRLSSSAN…QVVASMAEIE (237 aa).

This sequence belongs to the methyl-accepting chemotaxis (MCP) protein family. In terms of processing, methylated. Saturated fatty acids capric acid and lauric acid stimulate methylation. Short-chain alcohols, such as isoamyl alcohol, and some other solvents cause demethylation.

The protein resides in the cytoplasm. Methyl-accepting taxis protein necessary for the proper aggregation of cells to form fruiting bodies. Frz genes define a system of signal transduction analogous to the enterobacterial chemotaxis systems. This is Frizzy aggregation protein FrzCD (frzCD) from Myxococcus xanthus.